Here is a 636-residue protein sequence, read N- to C-terminus: Threonine--tRNA ligase (636 aa).

Residues 1 to 61 (MINITLPDGK…ETDASVVFIT (61 aa)) enclose the TGS domain. The catalytic stretch occupies residues 238 to 528 (DHRKLGTALD…LIEHYAGKFP (291 aa)). Residues Cys329, His380, and His505 each coordinate Zn(2+).

The protein belongs to the class-II aminoacyl-tRNA synthetase family. In terms of assembly, homodimer. It depends on Zn(2+) as a cofactor.

It localises to the cytoplasm. It catalyses the reaction tRNA(Thr) + L-threonine + ATP = L-threonyl-tRNA(Thr) + AMP + diphosphate + H(+). Its function is as follows. Catalyzes the attachment of threonine to tRNA(Thr) in a two-step reaction: L-threonine is first activated by ATP to form Thr-AMP and then transferred to the acceptor end of tRNA(Thr). Also edits incorrectly charged L-seryl-tRNA(Thr). In Desulfatibacillum aliphaticivorans, this protein is Threonine--tRNA ligase.